We begin with the raw amino-acid sequence, 256 residues long: Protein crossbronx-like (256 aa).

Residues 17-179 (NQGYKVLAEY…AKVSILWSCQ (163 aa)) enclose the UBC core domain.

The protein belongs to the ubiquitin-conjugating enzyme family. FTS subfamily.

The sequence is that of Protein crossbronx-like from Drosophila virilis (Fruit fly).